Consider the following 505-residue polypeptide: Facilitated trehalose transporter Tret1 (505 aa).

Topologically, residues 1–46 are cytoplasmic; that stretch reads MEMEIKDENLRNSVPFVRQLSTDSVKTKTEYDNEDGTPYKSTTQKL. A helical transmembrane segment spans residues 47–67; it reads FLWTQLLAAFAVSVGSMNVGF. Residues 68–91 are Extracellular-facing; the sequence is SSGYTSPAVLTMNITLDITKEEIT. N80 carries N-linked (GlcNAc...) asparagine glycosylation. Residues 92–112 form a helical membrane-spanning segment; sequence WVGGLMPLAALVGGIVGGPLI. At 113–124 the chain is on the cytoplasmic side; that stretch reads EYLGRKKTIMGT. The chain crosses the membrane as a helical span at residues 125 to 145; that stretch reads AVPFTIGWMLIANAINVVMVF. Residues 146 to 149 lie on the Extracellular side of the membrane; that stretch reads AGRV. A helical transmembrane segment spans residues 150 to 170; sequence ICGVCVGIVSLAFPVYIGETI. Topologically, residues 171 to 175 are cytoplasmic; sequence QPEVR. Residues 176 to 196 form a helical membrane-spanning segment; sequence GALGLLPTAFGNTGILLAFLV. The Extracellular portion of the chain corresponds to 197–201; sequence GSYLD. A helical transmembrane segment spans residues 202 to 222; the sequence is WSNLAFFGAAIPVPFFLLMIL. Topologically, residues 223–286 are cytoplasmic; it reads TPETPRWYVS…QLFSKRYLPA (64 aa). A helical membrane pass occupies residues 287-307; that stretch reads VMISLGLMLFQQLTGINAVIF. The Extracellular segment spans residues 308–323; that stretch reads YAASIFQMSGSSVDEN. A helical transmembrane segment spans residues 324 to 344; sequence LASIIIGVVNFISTFIATMLI. Over 345 to 350 the chain is Cytoplasmic; sequence DRLGRK. Residues 351 to 371 form a helical membrane-spanning segment; sequence VLLYISSVAMITTLLALGAYF. Residues 372–390 are Extracellular-facing; the sequence is YLKQNHIDVTAYGWLPLAC. Residues 391–411 traverse the membrane as a helical segment; sequence LVIYVLGFSIGFGPIPWLMLG. Residues 412–419 are Cytoplasmic-facing; that stretch reads EILPSKIR. The helical transmembrane segment at 420–437 threads the bilayer; it reads GTAASLATGFNWTCTFIV. Over 438–451 the chain is Extracellular; it reads TKTFQNIIDAIYMH. A helical transmembrane segment spans residues 452 to 472; that stretch reads GTLWLFAVICIGGLLFVIFFV. Over 473 to 505 the chain is Cytoplasmic; sequence PETKGKSLEEIEMKLTSGSRRVRNISKQPENIC.

This sequence belongs to the major facilitator superfamily. Sugar transporter (TC 2.A.1.1) family. Trehalose transporter subfamily. In terms of tissue distribution, expressed in many larval tissues at a low level, moderate levels of expression are seen in testis and head and highest expression in muscle.

The protein resides in the cell membrane. High-capacity facilitative transporter for trehalose. Does not transport maltose, sucrose or lactose. Mediates the bidirectional transfer of trehalose. Responsible for the transport of trehalose synthesized in the fat body and the incorporation of trehalose into other tissues that require a carbon source, thereby regulating trehalose levels in the hemolymph. This is Facilitated trehalose transporter Tret1 from Bombyx mori (Silk moth).